The sequence spans 762 residues: 5-methyltetrahydropteroyltriglutamate--homocysteine methyltransferase (762 aa).

Residues R16–K19 and K117 each bind 5-methyltetrahydropteroyltri-L-glutamate. Residues I438–S440 and E491 each bind L-homocysteine. L-methionine-binding positions include I438 to S440 and E491. 5-methyltetrahydropteroyltri-L-glutamate contacts are provided by residues R522–C523 and W568. D606 serves as a coordination point for L-homocysteine. D606 is an L-methionine binding site. E612 contributes to the 5-methyltetrahydropteroyltri-L-glutamate binding site. Residues H648, C650, and E672 each coordinate Zn(2+). Catalysis depends on H701, which acts as the Proton donor. C733 serves as a coordination point for Zn(2+).

It belongs to the vitamin-B12 independent methionine synthase family. Requires Zn(2+) as cofactor.

It carries out the reaction 5-methyltetrahydropteroyltri-L-glutamate + L-homocysteine = tetrahydropteroyltri-L-glutamate + L-methionine. It participates in amino-acid biosynthesis; L-methionine biosynthesis via de novo pathway; L-methionine from L-homocysteine (MetE route): step 1/1. Catalyzes the transfer of a methyl group from 5-methyltetrahydrofolate to homocysteine resulting in methionine formation. In Pseudomonas fluorescens (strain ATCC BAA-477 / NRRL B-23932 / Pf-5), this protein is 5-methyltetrahydropteroyltriglutamate--homocysteine methyltransferase.